A 138-amino-acid polypeptide reads, in one-letter code: Holo-[acyl-carrier-protein] synthase (138 aa).

2 residues coordinate Mg(2+): D8 and E56.

It belongs to the P-Pant transferase superfamily. AcpS family. Requires Mg(2+) as cofactor.

The protein resides in the cytoplasm. The enzyme catalyses apo-[ACP] + CoA = holo-[ACP] + adenosine 3',5'-bisphosphate + H(+). Transfers the 4'-phosphopantetheine moiety from coenzyme A to a Ser of acyl-carrier-protein. This Clostridium novyi (strain NT) protein is Holo-[acyl-carrier-protein] synthase.